We begin with the raw amino-acid sequence, 116 residues long: Protein Rev (116 aa).

Ser5 and Ser8 each carry phosphoserine; by host CK2. The homomultimerization stretch occupies residues Leu18–Asn26. The segment at Leu21–Gln49 is disordered. The short motif at Thr34–Arg50 is the Nuclear localization signal and RNA-binding (RRE) element. The segment covering Gln36–Glu47 has biased composition (basic residues). The Nuclear export signal and binding to XPO1 motif lies at Leu73–Asp84. A phosphoserine; by host mark is found at Ser92 and Ser99. Residues Ser92–Glu116 form a disordered region.

The protein belongs to the HIV-1 REV protein family. Homomultimer; when bound to the RRE. Multimeric assembly is essential for activity and may involve XPO1. Binds to human KPNB1, XPO1, TNPO1, RANBP5 and IPO7. Interacts with the viral Integrase. Interacts with human KHDRBS1. Interacts with human NAP1; this interaction decreases Rev multimerization and stimulates its activity. Interacts with human DEAD-box helicases DDX3 and DDX24; these interactions may serve for viral RNA export to the cytoplasm and packaging, respectively. Interacts with human PSIP1; this interaction may inhibit HIV-1 DNA integration by promoting dissociation of the Integrase-LEDGF/p75 complex. In terms of processing, asymmetrically arginine dimethylated at one site by host PRMT6. Methylation impairs the RNA-binding activity and export of viral RNA from the nucleus to the cytoplasm. Phosphorylated by protein kinase CK2. Presence of, and maybe binding to the N-terminus of the regulatory beta subunit of CK2 is necessary for CK2-mediated Rev's phosphorylation.

It localises to the host nucleus. The protein localises to the host nucleolus. Its subcellular location is the host cytoplasm. In terms of biological role, escorts unspliced or incompletely spliced viral pre-mRNAs (late transcripts) out of the nucleus of infected cells. These pre-mRNAs carry a recognition sequence called Rev responsive element (RRE) located in the env gene, that is not present in fully spliced viral mRNAs (early transcripts). This function is essential since most viral proteins are translated from unspliced or partially spliced pre-mRNAs which cannot exit the nucleus by the pathway used by fully processed cellular mRNAs. Rev itself is translated from a fully spliced mRNA that readily exits the nucleus. Rev's nuclear localization signal (NLS) binds directly to KPNB1/Importin beta-1 without previous binding to KPNA1/Importin alpha-1. KPNB1 binds to the GDP bound form of RAN (Ran-GDP) and targets Rev to the nucleus. In the nucleus, the conversion from Ran-GDP to Ran-GTP dissociates Rev from KPNB1 and allows Rev's binding to the RRE in viral pre-mRNAs. Rev multimerization on the RRE via cooperative assembly exposes its nuclear export signal (NES) to the surface. Rev can then form a complex with XPO1/CRM1 and Ran-GTP, leading to nuclear export of the complex. Conversion from Ran-GTP to Ran-GDP mediates dissociation of the Rev/RRE/XPO1/RAN complex, so that Rev can return to the nucleus for a subsequent round of export. Beside KPNB1, also seems to interact with TNPO1/Transportin-1, RANBP5/IPO5 and IPO7/RANBP7 for nuclear import. The nucleoporin-like HRB/RIP is an essential cofactor that probably indirectly interacts with Rev to release HIV RNAs from the perinuclear region to the cytoplasm. This Homo sapiens (Human) protein is Protein Rev.